The chain runs to 165 residues: Protein eva-1 homolog B (165 aa).

A helical transmembrane segment spans residues 29–49 (GLYFVLGVCFGLLLTLCLLVI). Disordered regions lie at residues 57-109 (PRPR…GPLN) and 143-165 (LLGT…MHYY). Positions 74 to 84 (EPEDDDEDEED) are enriched in acidic residues. 3 positions are modified to phosphothreonine: Thr85, Thr148, and Thr158.

Belongs to the EVA1 family.

It is found in the membrane. This chain is Protein eva-1 homolog B (EVA1B), found in Homo sapiens (Human).